A 1910-amino-acid polypeptide reads, in one-letter code: C2 domain-containing protein (1910 aa).

The span at 1 to 28 shows a compositional bias: basic and acidic residues; sequence MMKLKEMVEAAEAKVESKPPQAAEEKAP. 3 disordered regions span residues 1-54, 355-377, and 398-428; these read MMKL…EPLD, AMKL…PEDG, and LEEL…DGPQ. Residues 414–423 are compositionally biased toward basic and acidic residues; it reads KGEDKKDGNK. The C2 domain maps to 557–678; it reads QLGEVSESDS…FFNEKHNKRN (122 aa). Basic and acidic residues-rich tracts occupy residues 1192–1205 and 1215–1228; these read LAQK…DAQR and GHEG…DKQG. Disordered stretches follow at residues 1192-1267, 1405-1424, 1431-1654, 1666-1747, 1822-1841, and 1879-1910; these read LAQK…VKKG, ATAG…RDMQ, LEEA…SMGA, QRKH…FLSS, AKEE…DWSD, and DACS…AGRT. Composition is skewed to low complexity over residues 1239 to 1257 and 1405 to 1414; these read AAAA…VQGA and ATAGEGEQQT. A compositionally biased stretch (basic residues) spans 1440–1469; the sequence is KKKKKKEKKEKKEKKEKKEKKEKKEKKKKK. Over residues 1492 to 1502 the composition is skewed to low complexity; that stretch reads PAAAIPSVLLP. A compositionally biased stretch (basic residues) spans 1517 to 1526; that stretch reads KKEKKEKKKK. Over residues 1550–1561 the composition is skewed to low complexity; sequence PAAAIPSILLPA. Residues 1569–1584 show a composition bias toward basic and acidic residues; sequence EKPKEKKTEKKKEKHT. Positions 1595 to 1604 are enriched in polar residues; the sequence is LPESETTAVV. Low complexity-rich tracts occupy residues 1620–1629 and 1675–1698; these read VPSSIASSEA and SSSS…SSSS. Basic and acidic residues predominate over residues 1701-1711; sequence AETRAKADALR. Composition is skewed to low complexity over residues 1712 to 1722 and 1729 to 1747; these read ARLQAAQARLA and VSSS…FLSS. Positions 1766 to 1828 form a coiled coil; it reads QQRLQKMVSG…TRRAKEEKDL (63 aa). The segment covering 1890 to 1904 has biased composition (polar residues); that stretch reads ESRTTAGAKLRQQQL.

It is found in the membrane. Its function is as follows. Regulates microneme secretion. Probably involved in regulation of rhoptry and dense granule secretion. The sequence is that of C2 domain-containing protein from Toxoplasma gondii.